Consider the following 359-residue polypeptide: 4-galactosyl-N-acetylglucosaminide 3-alpha-L-fucosyltransferase 9 (359 aa).

The Cytoplasmic portion of the chain corresponds to 1–11; that stretch reads MTSTSKGILRP. A helical; Signal-anchor for type II membrane protein membrane pass occupies residues 12–32; that stretch reads FLIVCIILGCFMACLLIYIKP. Residues 33 to 359 are Lumenal-facing; it reads TNSWVFSPME…VGNLEKWFWN (327 aa). A glycan (N-linked (GlcNAc...) asparagine) is linked at Asn62. The segment at 63–168 is acceptor-binding; that stretch reads ETTILVWVWP…RRDSDIQVPY (106 aa). Gln75 serves as a coordination point for a beta-D-galactosyl-(1-&gt;4)-N-acetyl-beta-D-glucosaminyl derivative. 3 disulfide bridges follow: Cys82–Cys335, Cys91–Cys338, and Cys190–Cys238. A glycan (N-linked (GlcNAc...) asparagine) is linked at Asn101. Residue Glu137 participates in a beta-D-galactosyl-(1-&gt;4)-N-acetyl-beta-D-glucosaminyl derivative binding. Glu137 serves as the catalytic Nucleophile. A GDP-beta-L-fucose-binding site is contributed by Glu137. The N-linked (GlcNAc...) asparagine glycan is linked to Asn153. Residues Tyr168, Val192, Ser194, Asn195, Arg202, Val226, Tyr241, Asn246, Tyr252, Glu255, and Lys256 each contribute to the GDP-beta-L-fucose site. The segment at 169–326 is donor-binding; it reads GFLTVSTNPF…NWRKDFTVNL (158 aa). Residues 327–359 are acceptor-binding; it reads PRFWESHACLACDHVKRHQEYKSVGNLEKWFWN.

The protein belongs to the glycosyltransferase 10 family. As to quaternary structure, homodimer. Post-translationally, N-glycosylated with complex-type N-glycans. In terms of tissue distribution, mainly detected in brain and kidney.

It is found in the golgi apparatus. The protein resides in the trans-Golgi network membrane. The protein localises to the golgi apparatus membrane. The catalysed reaction is a beta-D-galactosyl-(1-&gt;4)-N-acetyl-beta-D-glucosaminyl derivative + GDP-beta-L-fucose = a beta-D-galactosyl-(1-&gt;4)-[alpha-L-fucosyl-(1-&gt;3)]-N-acetyl-beta-D-glucosaminyl derivative + GDP + H(+). It carries out the reaction an alpha-Neu5Ac-(2-&gt;3)-beta-D-Gal-(1-&gt;4)-beta-D-GlcNAc-(1-&gt;3)-beta-D-Gal-(1-&gt;4)-beta-D-GlcNAc derivative + GDP-beta-L-fucose = an alpha-Neu5Ac-(2-&gt;3)-beta-D-Gal-(1-&gt;4)-beta-D-GlcNAc-(1-&gt;3)-beta-D-Gal-(1-&gt;4)-[alpha-L-Fuc-(1-&gt;3)]-beta-D-GlcNAc derivative + GDP + H(+). The enzyme catalyses alpha-N-glycoloylneuraminosyl-(2-&gt;3)-beta-D-galactosyl-(1-&gt;4)-N-acetyl-beta-D-glucosaminyl-(1-&gt;3)-beta-D-galactosyl-(1-&gt;4)-N-acetyl-beta-D-glucosaminyl-(1-&gt;3)-beta-D-galactosyl-(1-&gt;4)-beta-D-glucosyl-(1&lt;-&gt;1')-ceramide + GDP-beta-L-fucose = alpha-N-glycoloylneuraminosyl-(2-&gt;3)-beta-D-galactosyl-(1-&gt;4)-N-acetyl-beta-D-glucosaminyl-(1-&gt;3)-beta-D-galactosyl-(1-&gt;4)-[alpha-L-fucosyl-(1-&gt;3)]-N-acetyl-beta-D-glucosaminyl-(1-&gt;3)-beta-D-galactosyl-(1-&gt;4)-beta-D-glucosyl-(1&lt;-&gt;1')-ceramide + GDP + H(+). It catalyses the reaction alpha-D-galactosyl-(1-&gt;3)-beta-D-galactosyl-(1-&gt;4)-N-acetyl-beta-D-glucosaminyl-(1-&gt;3)-beta-D-galactosyl-(1-&gt;4)-beta-D-glucosyl-(1&lt;-&gt;1')-ceramide + GDP-beta-L-fucose = a neolactoside IV(3)-alpha-Gal,III(3)-alpha-Fuc-nLc4Cer + GDP + H(+). The catalysed reaction is a neolactoside nLc4Cer + GDP-beta-L-fucose = a neolactoside III(3)-alpha-Fuc-nLc4Cer + GDP + H(+). It carries out the reaction an N-acetyl-alpha-neuraminyl-(2-&gt;3)-beta-D-galactosyl-(1-&gt;4)-N-acetyl-beta-D-glucosaminyl derivative + GDP-beta-L-fucose = an alpha-Neu5Ac-(2-&gt;3)-beta-D-Gal-(1-&gt;4)-[alpha-L-Fuc-(1-&gt;3)]-beta-D-GlcNAc derivative + GDP + H(+). The enzyme catalyses beta-D-Gal-(1-&gt;4)-beta-D-GlcNAc-(1-&gt;3)-beta-D-Gal-(1-&gt;4)-D-Glc + GDP-beta-L-fucose = beta-D-Gal-(1-&gt;4)-[alpha-L-Fuc-(1-&gt;3)]-beta-D-GlcNAc-(1-&gt;3)-beta-D-Gal-(1-&gt;4)-D-Glc + GDP + H(+). It catalyses the reaction an alpha-L-Fuc-(1-&gt;2)-beta-D-Gal-(1-&gt;4)-beta-D-GlcNAc derivative + GDP-beta-L-fucose = an alpha-L-Fuc-(1-&gt;2)-beta-D-Gal-(1-&gt;4)-[alpha-L-Fuc-(1-&gt;3)]-beta-D-GlcNAc derivative + GDP + H(+). It participates in protein modification; protein glycosylation. Its pathway is glycolipid biosynthesis. With respect to regulation, activated by Mn2+. Functionally, catalyzes alpha(1-&gt;3) linkage of fucosyl moiety transferred from GDP-beta-L-fucose to N-acetyl glucosamine (GlcNAc) within type 2 lactosamine (LacNAc, beta-D-Gal-(1-&gt;4)-beta-D-GlcNAc-) glycan attached to glycolipids and N- or O-linked glycoproteins. Fucosylates distal type 2 LacNAc and its fucosylated (H-type 2 LacNAc) and sialylated (sialyl-type 2 LacNAc) derivatives to form Lewis x (Lex) (CD15) and Lewis y (Ley) antigenic epitopes involved in cell adhesion and differentiation. Generates Lex epitopes in the brain, presumably playing a role in the maintenance of neuronal stemness and neurite outgrowth in progenitor neural cells. Fucosylates the internal type 2 LacNAc unit of the polylactosamine chain to form VIM-2 antigen that serves as recognition epitope for SELE. Can also modify milk oligosaccharides in particular type 2 tetrasaccharide LNnT. The chain is 4-galactosyl-N-acetylglucosaminide 3-alpha-L-fucosyltransferase 9 from Mus musculus (Mouse).